Reading from the N-terminus, the 2208-residue chain is RNA-directed RNA polymerase L (2208 aa).

The endonuclease stretch occupies residues 26–284; the sequence is KEALLSQVEV…SHAGTTVPEC (259 aa). Mn(2+) contacts are provided by glutamate 51, aspartate 89, and glutamate 102. Residue lysine 115 is part of the active site. A RdRp catalytic domain is found at 1172 to 1370; the sequence is CDMKMAVNNG…FLSSKLNKFV (199 aa). Aspartate 1330 provides a ligand contact to Mg(2+).

Belongs to the Bunyavirales RNA polymerase family. In terms of assembly, homomultimer; the oligomeric structure is essential for the polymerase activity. Interacts with nucleoprotein N. Interacts with protein Z; this interaction inhibits viral transcription and replication, Z partially blocks the product exit tunnel for the releasing nascent RNA product. The cofactor is Mn(2+). Mg(2+) serves as cofactor.

The protein localises to the virion. It localises to the host cytoplasm. The enzyme catalyses RNA(n) + a ribonucleoside 5'-triphosphate = RNA(n+1) + diphosphate. Functionally, RNA-dependent RNA polymerase, which is responsible for the replication and transcription of the viral RNA genome using antigenomic RNA as an intermediate. During transcription, synthesizes subgenomic RNAs and assures their capping by a cap-snatching mechanism, which involves the endonuclease activity cleaving the host capped pre-mRNAs. These short capped RNAs are then used as primers for viral transcription. The 3'-end of subgenomic mRNAs molecules are heterogeneous and not polyadenylated. The replicase function is to direct synthesis of antigenomic and genomic RNA which are encapsidated and non capped. As a consequence of the use of the same enzyme for both transcription and replication, these mechanisms need to be well coordinated. These processes may be regulated by proteins N and Z in a dose-dependent manner. Z protein inhibits the viral polymerase L und thus the viral transcription and RNA synthesis. This Hylaeamys megacephalus (Large-headed rice rat) protein is RNA-directed RNA polymerase L.